A 204-amino-acid polypeptide reads, in one-letter code: Large ribosomal subunit protein bL25 (204 aa).

The protein belongs to the bacterial ribosomal protein bL25 family. CTC subfamily. Part of the 50S ribosomal subunit; part of the 5S rRNA/L5/L18/L25 subcomplex. Contacts the 5S rRNA. Binds to the 5S rRNA independently of L5 and L18.

Functionally, this is one of the proteins that binds to the 5S RNA in the ribosome where it forms part of the central protuberance. The sequence is that of Large ribosomal subunit protein bL25 from Burkholderia mallei (strain NCTC 10247).